Here is a 395-residue protein sequence, read N- to C-terminus: Acid ceramidase (395 aa).

A signal peptide spans 1-21; sequence MLGRSRLTFVLLSVTVTCSVA. Cysteine 31 and cysteine 340 are disulfide-bonded. Cysteine 143 (nucleophile) is an active-site residue. N-linked (GlcNAc...) asparagine glycosylation is found at asparagine 173, asparagine 259, asparagine 342, and asparagine 348. The cysteines at positions 388 and 392 are disulfide-linked.

It belongs to the acid ceramidase family. As to quaternary structure, heterodimer; disulfide-linked. The heterodimer is composed of the disulfide-linked alpha and beta chains produced by autocatalytic cleavage of the precursor. Post-translationally, N-glycosylated. In terms of processing, proteolytically cleaved into two chains alpha and beta that remain associated via a disulfide bond. Cleavage gives rise to a conformation change that activates the enzyme. The same catalytic Cys residue mediates the autoproteolytic cleavage and subsequent hydrolysis of lipid substrates. The beta chain may undergo an additional C-terminal processing.

It localises to the lysosome. It is found in the secreted. The enzyme catalyses an N-acylsphing-4-enine + H2O = sphing-4-enine + a fatty acid. It catalyses the reaction N-dodecanoylsphing-4-enine + H2O = dodecanoate + sphing-4-enine. The catalysed reaction is N-tetradecanoylsphing-4-enine + H2O = tetradecanoate + sphing-4-enine. It carries out the reaction N-hexadecanoylsphing-4-enine + H2O = sphing-4-enine + hexadecanoate. The enzyme catalyses N-octadecanoylsphing-4-enine + H2O = sphing-4-enine + octadecanoate. It catalyses the reaction N-dodecanoyl-(4R)-hydroxysphinganine + H2O = (4R)-hydroxysphinganine + dodecanoate. The catalysed reaction is N-(dodecanoyl)-sphinganine + H2O = dodecanoate + sphinganine. It carries out the reaction N-(acetyl)-sphing-4-enine + H2O = sphing-4-enine + acetate. The enzyme catalyses N-(hexanoyl)sphing-4-enine + H2O = hexanoate + sphing-4-enine. It catalyses the reaction N-octanoylsphing-4-enine + H2O = octanoate + sphing-4-enine. The catalysed reaction is N-(9Z-octadecenoyl)-sphing-4-enine + H2O = sphing-4-enine + (9Z)-octadecenoate. It carries out the reaction N-dodecanoylethanolamine + H2O = dodecanoate + ethanolamine. It functions in the pathway lipid metabolism; sphingolipid metabolism. Functionally, lysosomal ceramidase that hydrolyzes sphingolipid ceramides into sphingosine and free fatty acids at acidic pH. Ceramides, sphingosine, and its phosphorylated form sphingosine-1-phosphate are bioactive lipids that mediate cellular signaling pathways regulating several biological processes including cell proliferation, apoptosis and differentiation. Has a higher catalytic efficiency towards C12-ceramides versus other ceramides. Also catalyzes the reverse reaction allowing the synthesis of ceramides from fatty acids and sphingosine. For the reverse synthetic reaction, the natural sphingosine D-erythro isomer is more efficiently utilized as a substrate compared to D-erythro-dihydrosphingosine and D-erythro-phytosphingosine, while the fatty acids with chain lengths of 12 or 14 carbons are the most efficiently used. Also has an N-acylethanolamine hydrolase activity. By regulating the levels of ceramides, sphingosine and sphingosine-1-phosphate in the epidermis, mediates the calcium-induced differentiation of epidermal keratinocytes. Also indirectly regulates tumor necrosis factor/TNF-induced apoptosis. By regulating the intracellular balance between ceramides and sphingosine, in adrenocortical cells, probably also acts as a regulator of steroidogenesis. The sequence is that of Acid ceramidase from Balaenoptera acutorostrata scammoni (North Pacific minke whale).